Consider the following 62-residue polypeptide: Venom peptide 6 (62 aa).

A signal peptide spans 1–26 (MKSTSVFILFAGIAIMACLQMTGTEA). 3 AXPX repeats span residues 26 to 29 (AAPS), 30 to 33 (ASPN), and 40 to 43 (ADPD). Residues 27 to 46 (APSASPNPTPVARADPDPEA) constitute a propeptide that is removed on maturation.

The protein belongs to the MCD family. Expressed by the venom gland.

The protein localises to the secreted. The protein resides in the target cell membrane. Functionally, antimicrobial peptide with strong activity against the fungus B.cinerea (MIC=5 uM) and the Gram-positive bacterium S.aureus (MIC=50 uM), and no activity against C.albicans (MIC&gt;200 uM), and the Gram-negative bacterium E.coli (MIC&gt;200 uM). Shows cytolytic activity against insect cell lines. Has no hemolytic activity against human erythrocytes. In vivo, peptide injection in the vicinity of the head and thorax of lepidopteran larvae induces feeding disorder that lasts one or two days before recovering. The chain is Venom peptide 6 from Eumenes pomiformis (Potter wasp).